The chain runs to 322 residues: Ribose-phosphate pyrophosphokinase 1 (322 aa).

ATP-binding positions include 39–41 (DGE) and 98–99 (RQ). Positions 132 and 173 each coordinate Mg(2+). Lys-196 is an active-site residue. D-ribose 5-phosphate-binding positions include Arg-198, Asp-224, and 228–232 (DTAGT).

This sequence belongs to the ribose-phosphate pyrophosphokinase family. Class I subfamily. As to quaternary structure, homohexamer. Requires Mg(2+) as cofactor.

The protein resides in the cytoplasm. The enzyme catalyses D-ribose 5-phosphate + ATP = 5-phospho-alpha-D-ribose 1-diphosphate + AMP + H(+). Its pathway is metabolic intermediate biosynthesis; 5-phospho-alpha-D-ribose 1-diphosphate biosynthesis; 5-phospho-alpha-D-ribose 1-diphosphate from D-ribose 5-phosphate (route I): step 1/1. Involved in the biosynthesis of the central metabolite phospho-alpha-D-ribosyl-1-pyrophosphate (PRPP) via the transfer of pyrophosphoryl group from ATP to 1-hydroxyl of ribose-5-phosphate (Rib-5-P). In Streptococcus mutans serotype c (strain ATCC 700610 / UA159), this protein is Ribose-phosphate pyrophosphokinase 1.